The primary structure comprises 138 residues: Small ribosomal subunit protein uS12m (138 aa).

Residues 1–29 constitute a mitochondrion transit peptide; it reads MSWSGLLHGLNTSLTCGPALVPRLWATCS. Residues 36 to 56 form a disordered region; that stretch reads MHRLGPPKRPPRKLGPTEGRP.

This sequence belongs to the universal ribosomal protein uS12 family. In terms of assembly, component of the mitochondrial small ribosomal subunit (mt-SSU). Mature mammalian 55S mitochondrial ribosomes consist of a small (28S) and a large (39S) subunit. The 28S small subunit contains a 12S ribosomal RNA (12S mt-rRNA) and 30 different proteins. The 39S large subunit contains a 16S rRNA (16S mt-rRNA), a copy of mitochondrial valine transfer RNA (mt-tRNA(Val)), which plays an integral structural role, and 52 different proteins.

It is found in the mitochondrion. The chain is Small ribosomal subunit protein uS12m (MRPS12) from Homo sapiens (Human).